A 77-amino-acid polypeptide reads, in one-letter code: Translation initiation factor IF-1, chloroplastic (77 aa).

An S1-like domain is found at 1–71; the sequence is MKRQKWIHEG…TRGRIIYRLR (71 aa).

Belongs to the IF-1 family. In terms of assembly, component of the 30S ribosomal translation pre-initiation complex which assembles on the 30S ribosome in the order IF-2 and IF-3, IF-1 and N-formylmethionyl-tRNA(fMet); mRNA recruitment can occur at any time during PIC assembly.

It is found in the plastid. The protein localises to the chloroplast. In terms of biological role, one of the essential components for the initiation of protein synthesis. Stabilizes the binding of IF-2 and IF-3 on the 30S subunit to which N-formylmethionyl-tRNA(fMet) subsequently binds. Helps modulate mRNA selection, yielding the 30S pre-initiation complex (PIC). Upon addition of the 50S ribosomal subunit IF-1, IF-2 and IF-3 are released leaving the mature 70S translation initiation complex. This Leucophyllum frutescens (Texas ranger) protein is Translation initiation factor IF-1, chloroplastic.